Consider the following 92-residue polypeptide: Probable Fe(2+)-trafficking protein (92 aa).

The protein belongs to the Fe(2+)-trafficking protein family.

Could be a mediator in iron transactions between iron acquisition and iron-requiring processes, such as synthesis and/or repair of Fe-S clusters in biosynthetic enzymes. This chain is Probable Fe(2+)-trafficking protein, found in Shewanella baltica (strain OS223).